The sequence spans 227 residues: 7-cyano-7-deazaguanine synthase (227 aa).

Position 7 to 17 (7 to 17) interacts with ATP; that stretch reads LSGGMDSLVTT. Residues cysteine 187, cysteine 195, cysteine 198, and cysteine 201 each coordinate Zn(2+).

This sequence belongs to the QueC family. Zn(2+) is required as a cofactor.

The enzyme catalyses 7-carboxy-7-deazaguanine + NH4(+) + ATP = 7-cyano-7-deazaguanine + ADP + phosphate + H2O + H(+). Its pathway is purine metabolism; 7-cyano-7-deazaguanine biosynthesis. Catalyzes the ATP-dependent conversion of 7-carboxy-7-deazaguanine (CDG) to 7-cyano-7-deazaguanine (preQ(0)). This is 7-cyano-7-deazaguanine synthase from Chlorobium luteolum (strain DSM 273 / BCRC 81028 / 2530) (Pelodictyon luteolum).